A 448-amino-acid chain; its full sequence is Proline iminopeptidase aneH (448 aa).

In terms of domain architecture, AB hydrolase-1 spans 64 to 191; sequence PWMLYLQGGP…VEVFIGGGPC (128 aa). Ser164 (nucleophile) is an active-site residue. Residue Asp397 is part of the active site. His425 acts as the Proton donor in catalysis.

Belongs to the peptidase S33 family. Homooligomer.

The protein resides in the cytoplasm. The enzyme catalyses Release of N-terminal proline from a peptide.. It functions in the pathway secondary metabolite biosynthesis. In terms of biological role, proline iminopeptidase; part of the gene cluster that mediates the biosynthesis of aculenes, a unique type of norsesquiterpenes that contain a nordaucane skeleton linked to an L-proline moiety and are of mixed biosynthetic origin. The pathway begins with the synthesis of dauca-4,7-diene by the terpene cyclase aneC using farnesyl pyrophosphate (FPP) as substrate. The cytochrome P450 monooxygenase aneF then performs the initial oxidation at C-12 of dauca-4,7-diene to yield asperaculane D. Asperaculane D is substrate of the cytochrome P450 monooxygenase aneD for C-10 hydroxylation to yield asperaculane E. The cytochrome P450 monooxygenase aneG then converts asperaculane E into aculene D via C-2 oxidation. The monomodular nonribosomal peptide synthtase aneB adenylates L-proline and the thiohydrolase aneE transfers this activated L-proline derivative to aculenes D and C to produce respectively aculenes B and A. The dioxygenase aneA converts aculene D into aculene C, and aculene B into aculene A by introducing the 5,6-alkene moiety. Asperculanes A, B, C and F, as well as 14-prolyl asperculane C, might be shunt products of the pathway. This is Proline iminopeptidase aneH from Aspergillus aculeatus (strain ATCC 16872 / CBS 172.66 / WB 5094).